We begin with the raw amino-acid sequence, 246 residues long: MSKLKKTKHPFPCFSIWQQFKRKLYRTFALFLVLFLSSVVLFRFVPVPFSAYMLQQKIGYLFEGNLSSTIHYQWVPLEQISQSMQLAVIASEDQRFATHYGFDWDAIQSALQHNQRGKRIRGGSTISQQTAKNLYLWHGQSWLRKAIEMPTTLVLETLWSKKRILEVYLNIAEFGPNIFGVEAASQHYFRKPAKQLSNAEAALLAAVLPNPIIFKVNKPSAYVKKRQQHIQRQMGLLGKQHLSQLD.

Residues 28–48 (FALFLVLFLSSVVLFRFVPVP) form a helical membrane-spanning segment.

The protein belongs to the glycosyltransferase 51 family.

It localises to the cell inner membrane. It catalyses the reaction [GlcNAc-(1-&gt;4)-Mur2Ac(oyl-L-Ala-gamma-D-Glu-L-Lys-D-Ala-D-Ala)](n)-di-trans,octa-cis-undecaprenyl diphosphate + beta-D-GlcNAc-(1-&gt;4)-Mur2Ac(oyl-L-Ala-gamma-D-Glu-L-Lys-D-Ala-D-Ala)-di-trans,octa-cis-undecaprenyl diphosphate = [GlcNAc-(1-&gt;4)-Mur2Ac(oyl-L-Ala-gamma-D-Glu-L-Lys-D-Ala-D-Ala)](n+1)-di-trans,octa-cis-undecaprenyl diphosphate + di-trans,octa-cis-undecaprenyl diphosphate + H(+). Its pathway is cell wall biogenesis; peptidoglycan biosynthesis. Functionally, peptidoglycan polymerase that catalyzes glycan chain elongation from lipid-linked precursors. This is Biosynthetic peptidoglycan transglycosylase from Pasteurella multocida (strain Pm70).